Reading from the N-terminus, the 28-residue chain is Cyclotide vodo I3 (28 aa).

Disulfide bonds link C4–C18, C8–C20, and C13–C25.

In terms of processing, this is a cyclic peptide. Contains 3 disulfide bonds.

Functionally, probably participates in a plant defense mechanism. This Viola odorata (Sweet violet) protein is Cyclotide vodo I3.